Consider the following 715-residue polypeptide: MFEKLSQAACSEPFAFLGPFIDPTQGALRVWMPGATGVALVLEGQPRIALEREKESAFILKADLNLHLTHYQLAIDWNGIEQLVDDPYQYHGIYAEYDDLHTPKTMYQHMGSQFMTLERDGKSISGIRFLVYAPHATAVSLVGSFNDWDGRRHPMQRLDYGIWGLFIPGLTEGVSYKFEMKGPKGEGLPHKADPWGFYAEQYPSFASVTYDHARYQWQDAQWQTRPVTEKRKEALSFYELHAGSWKRNEQGEFLNYRELAAELVPYLVDMGYTHVELMPVSEHPFYGSWGYQPVGLFAPTSRYGSPDDFKFFVDACHQAGIGVVLDWVPAHFPSDDHGLANFDGTPLFHDPDPRRGWHQDWNSFIYDLGREQVRRFLVSNALYWFEQFHIDGIRVDAVASMLYLDYSRSHGQWIPNMDGGNENYDAIATLKWMNEEVYKYFPNAMTIAEESTAFPGVSAPTFMGGLGFGFKWNMGWMHDSLSYIKEEPVHRKYHHNTLTFPLVYAHSENYVLSLSHDEVVYGKGSIHNKMPGDEWQQTANLRAYFGYMYGQPGKKLNFMGAEIGQTAEWNHDDQLQWFLLDFPRHQGVQALTRDLNHLYRNEAALHDQDCIPAGFEWRLQDAAEQSIIAHERISEAGERILVVSNFTPVPRDEFRLGVPNKGRYQLLLNTDDSKYAGSGYEVVVDVKSEAVVSEDLAQSIVLRLPPLSTLFYKLA.

D396 acts as the Nucleophile in catalysis. E449 (proton donor) is an active-site residue.

The protein belongs to the glycosyl hydrolase 13 family. GlgB subfamily. As to quaternary structure, monomer.

It carries out the reaction Transfers a segment of a (1-&gt;4)-alpha-D-glucan chain to a primary hydroxy group in a similar glucan chain.. It participates in glycan biosynthesis; glycogen biosynthesis. In terms of biological role, catalyzes the formation of the alpha-1,6-glucosidic linkages in glycogen by scission of a 1,4-alpha-linked oligosaccharide from growing alpha-1,4-glucan chains and the subsequent attachment of the oligosaccharide to the alpha-1,6 position. This Vibrio vulnificus (strain YJ016) protein is 1,4-alpha-glucan branching enzyme GlgB.